Reading from the N-terminus, the 103-residue chain is Urease subunit beta (103 aa).

The protein belongs to the urease beta subunit family. Heterotrimer of UreA (gamma), UreB (beta) and UreC (alpha) subunits. Three heterotrimers associate to form the active enzyme.

The protein resides in the cytoplasm. It carries out the reaction urea + 2 H2O + H(+) = hydrogencarbonate + 2 NH4(+). The protein operates within nitrogen metabolism; urea degradation; CO(2) and NH(3) from urea (urease route): step 1/1. This Streptomyces avermitilis (strain ATCC 31267 / DSM 46492 / JCM 5070 / NBRC 14893 / NCIMB 12804 / NRRL 8165 / MA-4680) protein is Urease subunit beta.